Here is a 199-residue protein sequence, read N- to C-terminus: MTFGDWPPQRRIGLTGGIASGKSSVAALLEKRGCPVLDADVYAREALATDTSASKAVVARYGKRVQKDGTSDIDRAELAAIVFNDPNERSWLEQLVHPIVQRRFDDALRSLPDAPIVILMIPLLFEAGLEKWCSEIWVVRCTALQQRERLMARNNCTEAEATQRIAAQWPIDIKVQRADSVINNSGRIDDLHDQLDALL.

The DPCK domain occupies 11–199 (RIGLTGGIAS…DLHDQLDALL (189 aa)). An ATP-binding site is contributed by 19 to 24 (ASGKSS).

It belongs to the CoaE family.

The protein resides in the cytoplasm. The enzyme catalyses 3'-dephospho-CoA + ATP = ADP + CoA + H(+). The protein operates within cofactor biosynthesis; coenzyme A biosynthesis; CoA from (R)-pantothenate: step 5/5. Its function is as follows. Catalyzes the phosphorylation of the 3'-hydroxyl group of dephosphocoenzyme A to form coenzyme A. This chain is Dephospho-CoA kinase, found in Synechococcus sp. (strain CC9902).